The sequence spans 390 residues: 3-ketoacyl-CoA thiolase (390 aa).

The active-site Acyl-thioester intermediate is cysteine 95. Residues histidine 346 and cysteine 376 each act as proton acceptor in the active site.

This sequence belongs to the thiolase-like superfamily. Thiolase family. As to quaternary structure, heterotetramer of two alpha chains (FadB) and two beta chains (FadA).

It localises to the cytoplasm. The catalysed reaction is an acyl-CoA + acetyl-CoA = a 3-oxoacyl-CoA + CoA. It functions in the pathway lipid metabolism; fatty acid beta-oxidation. In terms of biological role, catalyzes the final step of fatty acid oxidation in which acetyl-CoA is released and the CoA ester of a fatty acid two carbons shorter is formed. This is 3-ketoacyl-CoA thiolase from Acinetobacter baylyi (strain ATCC 33305 / BD413 / ADP1).